The chain runs to 539 residues: Chaperone Ric-8A (539 aa).

Belongs to the synembryn family.

Its subcellular location is the cytoplasm. It localises to the cell cortex. Its function is as follows. Chaperone that specifically binds and folds nascent G alpha proteins prior to G protein heterotrimer formation, promoting their stability and activity: folds GNAI1, GNAO1, GNA13 and GNAQ. Does not fold G(s) G-alpha proteins GNAS nor GNAL. Also acts as a guanine nucleotide exchange factor (GEF) for G alpha proteins by stimulating exchange of bound GDP for free GTP. This is Chaperone Ric-8A (ric8a) from Xenopus tropicalis (Western clawed frog).